An 890-amino-acid polypeptide reads, in one-letter code: DNA mismatch repair protein MutS (890 aa).

Basic and acidic residues predominate over residues 1–13; it reads MDKGINLQNDKEP. Positions 1–23 are disordered; the sequence is MDKGINLQNDKEPSPMAEGNPAD. Residue 649–656 participates in ATP binding; it reads GPNMGGKS.

It belongs to the DNA mismatch repair MutS family.

Its function is as follows. This protein is involved in the repair of mismatches in DNA. It is possible that it carries out the mismatch recognition step. This protein has a weak ATPase activity. In Paracidovorax citrulli (strain AAC00-1) (Acidovorax citrulli), this protein is DNA mismatch repair protein MutS.